Consider the following 584-residue polypeptide: Myo-inositol transporter 1 (584 aa).

Residues 1-81 (MGIHIPYLTS…TSVMITFNQS (81 aa)) are Cytoplasmic-facing. Position 12 is a phosphothreonine (Thr-12). Residues 13 to 42 (SQSNVGDAVGNADSVEFNSEHDSPSKRGKI) are disordered. Phosphoserine is present on residues Ser-26, Ser-31, Ser-35, Ser-37, and Ser-46. Basic and acidic residues predominate over residues 30-42 (NSEHDSPSKRGKI). A helical membrane pass occupies residues 82–102 (LSPFIITLTFVASISGFMFGY). At 103–129 (DTGYISSALISIGTDLDHKVLTYGEKE) the chain is on the extracellular side. A helical membrane pass occupies residues 130–150 (IVTAATSLGALITSIFAGTAA). At 151-163 (DIFGRKRCLMGSN) the chain is on the cytoplasmic side. Residues 164–184 (LMFVIGAILQVSAHTFWQMAV) traverse the membrane as a helical segment. The Extracellular segment spans residues 185–186 (GR). Residues 187 to 207 (LIMGFGVGIGSLIAPLFISEI) traverse the membrane as a helical segment. Over 208-215 (APKMIRGR) the chain is Cytoplasmic. The chain crosses the membrane as a helical span at residues 216–236 (LTVINSLWLTGGQLVAYGCGA). Residues 237–246 (GLNYVNNGWR) are Extracellular-facing. A helical transmembrane segment spans residues 247–267 (ILVGLSLIPTAVQFTCLCFLP). Over 268 to 349 (DTPRYYVMKG…IGCGLQAIQQ (82 aa)) the chain is Cytoplasmic. Residues 350 to 370 (FTGWNSLMYFSGTIFETVGFK) traverse the membrane as a helical segment. Asn-371 is a glycosylation site (N-linked (GlcNAc...) asparagine). At 371-376 (NSSAVS) the chain is on the extracellular side. The helical transmembrane segment at 377-397 (IIVSGTNFIFTLVAFFSIDKI) threads the bilayer. The Cytoplasmic portion of the chain corresponds to 398 to 400 (GRR). Residues 401 to 421 (TILLIGLPGMTMALVVCSIAF) traverse the membrane as a helical segment. Residues 422-441 (HFLGIKFDGAVAVVVSSGFS) are Extracellular-facing. A helical transmembrane segment spans residues 442 to 462 (SWGIVIIVFIIVFAAFYALGI). Residues 463-486 (GTVPWQQSELFPQNVRGIGTSYAT) are Cytoplasmic-facing. Residues 487 to 507 (ATNWAGSLVIASTFLTMLQNI) traverse the membrane as a helical segment. Over 508-510 (TPA) the chain is Extracellular. Residues 511–531 (GTFAFFAGLSCLSTIFCYFCY) traverse the membrane as a helical segment. The Cytoplasmic portion of the chain corresponds to 532–584 (PELSGLELEEVQTILKDGFNIKASKALAKKRKQQVARVHELKYEPTQEIIEDI). Lys-573 is covalently cross-linked (Glycyl lysine isopeptide (Lys-Gly) (interchain with G-Cter in ubiquitin)).

It belongs to the major facilitator superfamily. Sugar transporter (TC 2.A.1.1) family.

The protein resides in the cell membrane. The catalysed reaction is myo-inositol(out) + H(+)(out) = myo-inositol(in) + H(+)(in). Functionally, major transporter for myo-inositol. This chain is Myo-inositol transporter 1 (ITR1), found in Saccharomyces cerevisiae (strain ATCC 204508 / S288c) (Baker's yeast).